Reading from the N-terminus, the 447-residue chain is Cysteine--tRNA ligase (447 aa).

Cysteine 28 lines the Zn(2+) pocket. Positions proline 30–asparagine 40 match the 'HIGH' region motif. 3 residues coordinate Zn(2+): cysteine 211, histidine 236, and glutamate 240. Residues lysine 268–serine 272 carry the 'KMSKS' region motif. Lysine 271 provides a ligand contact to ATP.

The protein belongs to the class-I aminoacyl-tRNA synthetase family. In terms of assembly, monomer. The cofactor is Zn(2+).

The protein resides in the cytoplasm. The enzyme catalyses tRNA(Cys) + L-cysteine + ATP = L-cysteinyl-tRNA(Cys) + AMP + diphosphate. In Streptococcus mutans serotype c (strain ATCC 700610 / UA159), this protein is Cysteine--tRNA ligase.